The following is a 407-amino-acid chain: Semenogelin-2 (407 aa).

The signal sequence occupies residues 1-23; the sequence is MKSIILFVLSLVLILEKQAAVMG. Disordered stretches follow at residues 25 to 60, 133 to 158, 173 to 192, and 272 to 407; these read KDGS…TKSK, GQAH…LSSQ, KEQA…GSQS, and NLNQ…NKIS. Polar residues-rich tracts occupy residues 31–40, 137–158, and 174–192; these read QLPSGSSQFP, CGTQ…LSSQ, and EQAS…GSQS. Over residues 292 to 310 the composition is skewed to basic and acidic residues; the sequence is RTEERQLNHGEKSVQKDVS. A compositionally biased stretch (polar residues) spans 325–334; that stretch reads KSQNQVTIHS. The segment covering 335-345 has biased composition (basic and acidic residues); sequence QDQEHGHKENK. Residues 372–397 show a composition bias toward polar residues; that stretch reads GSISIQTEEQIHGKSQNXVRIPSQAQ.

Belongs to the semenogelin family. Interacts with SERPINA5.

Its subcellular location is the secreted. Functionally, participates in the formation of a gel matrix (sperm coagulum) entrapping the accessory gland secretions and ejaculated spermatozoa. This chain is Semenogelin-2 (SEMG2), found in Pan troglodytes (Chimpanzee).